We begin with the raw amino-acid sequence, 464 residues long: MMITLILFTTGIVMTTLVIPQNKLWANAISQSALLSLSSPLLIFSNHWSAPWHNLSNILASDSISAPLIALSCWLAPISLIASNNTISKQSELNQRTFIIIVIFIAGALIITFSALELLLFYVAFETTLIPTLILITRWGAQMERFQAGLYFMFYTLFGSLPLLISLIAIYISSSSLSIPNVELIWTPSETMETLNIWWALSIIAFLIKMPIYGFHLWLPKAHVEAPVAGSMILAAILLKLGGYGLIRLINLFATISLNSLSLALITFCSWGALVTSIICVRQTDLKALIAYSSVGHMSIVAAAIFSSTNWGTNGALILMIAYGLVSSDLFSLANTVYERSGTRTLAITRGLKTILPLSTLWWLVMSAANLGLPPSPNLIGEILILSSLIAWSIWLFPIIGLATIFGAIYSLMIFQLSQQGTPTNNINNISLSFSREHLLATLHTLPLILIIINPISALITWLK.

Transmembrane regions (helical) follow at residues 1–21, 63–83, 98–118, 119–139, 152–172, 197–217, 227–247, 261–281, 288–308, 314–334, 355–375, 389–409, and 443–463; these read MMIT…VIPQ, SISA…LIAS, FIII…ALEL, LLFY…ITRW, FMFY…AIYI, IWWA…GFHL, PVAG…YGLI, LSLA…IICV, ALIA…IFSS, NGAL…FSLA, ILPL…GLPP, LIAW…FGAI, and LHTL…ITWL.

It belongs to the complex I subunit 4 family.

It is found in the mitochondrion membrane. It carries out the reaction a ubiquinone + NADH + 5 H(+)(in) = a ubiquinol + NAD(+) + 4 H(+)(out). In terms of biological role, core subunit of the mitochondrial membrane respiratory chain NADH dehydrogenase (Complex I) that is believed to belong to the minimal assembly required for catalysis. Complex I functions in the transfer of electrons from NADH to the respiratory chain. The immediate electron acceptor for the enzyme is believed to be ubiquinone. The chain is NADH-ubiquinone oxidoreductase chain 4 (ND4) from Paracentrotus lividus (Common sea urchin).